The sequence spans 675 residues: Heat shock 70 kDa protein, mitochondrial (675 aa).

The N-terminal 52 residues, 1 to 52, are a transit peptide targeting the mitochondrion; it reads MAATLLRSLQRRNLSSSSVSAFRSLTGSTKTSYATHKLASLTRPFSSRPAGN. A disordered region spans residues 639–675; it reads VSKIGQHMSGGSSGGPSEGGSQGGEQAPEAEYEEVKK. Over residues 649–661 the composition is skewed to gly residues; sequence GSSGGPSEGGSQG. Positions 666 to 675 are enriched in acidic residues; it reads PEAEYEEVKK.

It belongs to the heat shock protein 70 family.

The protein resides in the mitochondrion. This is Heat shock 70 kDa protein, mitochondrial (HSP1) from Pisum sativum (Garden pea).